The chain runs to 218 residues: Large ribosomal subunit protein uL3 (218 aa).

Residues 127-167 (GFSRGPMSHGSKNHRLPGSIGAGTTPGRVYPGKRMAGRMGG) form a disordered region.

This sequence belongs to the universal ribosomal protein uL3 family. Part of the 50S ribosomal subunit. Forms a cluster with proteins L14 and L19.

Its function is as follows. One of the primary rRNA binding proteins, it binds directly near the 3'-end of the 23S rRNA, where it nucleates assembly of the 50S subunit. This chain is Large ribosomal subunit protein uL3, found in Prochlorococcus marinus (strain NATL1A).